The sequence spans 397 residues: Nuclear RNA export factor 5 (397 aa).

One can recognise an RRM domain in the interval 13–92 (WFKVTIPYGI…IFVSHFTAPY (80 aa)). LRR repeat units lie at residues 160-185 (ELLS…EKAP), 186-209 (KVKT…VKGL), 210-237 (KLEE…AIRD), and 238-265 (CFPK…ETMK). Residues 280–367 (LVLQFLQQSN…ESQRWWCLLS (88 aa)) enclose the NTF2; truncated domain.

Belongs to the NXF family. Interacts with NXT1 and NXT2.

The protein resides in the cytoplasm. It is found in the nucleus. Could be involved in the export of mRNA from the nucleus to the cytoplasm. Could also have a role in polarized cytoplasmic transport and localization of mRNA in neurons. The protein is Nuclear RNA export factor 5 (NXF5) of Homo sapiens (Human).